Consider the following 607-residue polypeptide: UvrABC system protein C (607 aa).

The region spanning 16–94 (GRPGVYRMFD…IKEWRPPYNI (79 aa)) is the GIY-YIG domain. Residues 203-238 (QQLGNELNAEMEKAAMALNFEKAAELRDQIALLRRV) enclose the UVR domain.

It belongs to the UvrC family. Interacts with UvrB in an incision complex.

It localises to the cytoplasm. Its function is as follows. The UvrABC repair system catalyzes the recognition and processing of DNA lesions. UvrC both incises the 5' and 3' sides of the lesion. The N-terminal half is responsible for the 3' incision and the C-terminal half is responsible for the 5' incision. The chain is UvrABC system protein C from Pseudomonas entomophila (strain L48).